We begin with the raw amino-acid sequence, 442 residues long: Cell division protein FtsZ (442 aa).

Residues Gly-18 to Asn-22, Gly-105 to Gly-107, Glu-136, Arg-140, and Asp-184 each bind GTP. Residues Ala-329–Pro-341 show a composition bias toward low complexity. A disordered region spans residues Ala-329–Gln-442. 2 stretches are compositionally biased toward basic and acidic residues: residues Pro-349–Asn-362 and Asn-390–Arg-431.

The protein belongs to the FtsZ family. As to quaternary structure, homodimer. Polymerizes to form a dynamic ring structure in a strictly GTP-dependent manner. Interacts directly with several other division proteins.

It is found in the cytoplasm. Its function is as follows. Essential cell division protein that forms a contractile ring structure (Z ring) at the future cell division site. The regulation of the ring assembly controls the timing and the location of cell division. One of the functions of the FtsZ ring is to recruit other cell division proteins to the septum to produce a new cell wall between the dividing cells. Binds GTP and shows GTPase activity. The polypeptide is Cell division protein FtsZ (Corynebacterium glutamicum (strain ATCC 13032 / DSM 20300 / JCM 1318 / BCRC 11384 / CCUG 27702 / LMG 3730 / NBRC 12168 / NCIMB 10025 / NRRL B-2784 / 534)).